A 306-amino-acid chain; its full sequence is Ribonuclease Z (306 aa).

Zn(2+) contacts are provided by His63, His65, Asp67, His68, His141, Asp211, and His269. Asp67 serves as the catalytic Proton acceptor.

This sequence belongs to the RNase Z family. Homodimer. The cofactor is Zn(2+).

It carries out the reaction Endonucleolytic cleavage of RNA, removing extra 3' nucleotides from tRNA precursor, generating 3' termini of tRNAs. A 3'-hydroxy group is left at the tRNA terminus and a 5'-phosphoryl group is left at the trailer molecule.. Functionally, zinc phosphodiesterase, which displays some tRNA 3'-processing endonuclease activity. Probably involved in tRNA maturation, by removing a 3'-trailer from precursor tRNA. The sequence is that of Ribonuclease Z from Staphylococcus aureus (strain bovine RF122 / ET3-1).